A 184-amino-acid chain; its full sequence is Ribosome-recycling factor (184 aa).

This sequence belongs to the RRF family.

The protein localises to the cytoplasm. Its function is as follows. Responsible for the release of ribosomes from messenger RNA at the termination of protein biosynthesis. May increase the efficiency of translation by recycling ribosomes from one round of translation to another. This is Ribosome-recycling factor from Aquifex aeolicus (strain VF5).